The chain runs to 311 residues: Light-independent protochlorophyllide reductase iron-sulfur ATP-binding protein (311 aa).

Residues Gly-10–Thr-15 and Lys-39 contribute to the ATP site. A Mg(2+)-binding site is contributed by Ser-14. Cys-95 and Cys-129 together coordinate [4Fe-4S] cluster. Asn-180–Arg-181 contributes to the ATP binding site.

The protein belongs to the NifH/BchL/ChlL family. As to quaternary structure, homodimer. Protochlorophyllide reductase is composed of three subunits; ChlL, ChlN and ChlB. [4Fe-4S] cluster serves as cofactor.

Its subcellular location is the plastid. It localises to the chloroplast. It catalyses the reaction chlorophyllide a + oxidized 2[4Fe-4S]-[ferredoxin] + 2 ADP + 2 phosphate = protochlorophyllide a + reduced 2[4Fe-4S]-[ferredoxin] + 2 ATP + 2 H2O. Its pathway is porphyrin-containing compound metabolism; chlorophyll biosynthesis (light-independent). Functionally, component of the dark-operative protochlorophyllide reductase (DPOR) that uses Mg-ATP and reduced ferredoxin to reduce ring D of protochlorophyllide (Pchlide) to form chlorophyllide a (Chlide). This reaction is light-independent. The L component serves as a unique electron donor to the NB-component of the complex, and binds Mg-ATP. The sequence is that of Light-independent protochlorophyllide reductase iron-sulfur ATP-binding protein from Oltmannsiellopsis viridis (Marine flagellate).